Here is a 69-residue protein sequence, read N- to C-terminus: MAIARGDFVRIKRPESYWYNEIGKVASIDKTGIKYNCTVRFDKCNYAGISGTAEGATTNMFAESELEKA.

This sequence belongs to the PsaE family.

Its subcellular location is the cellular thylakoid membrane. Functionally, stabilizes the interaction between PsaC and the PSI core, assists the docking of the ferredoxin to PSI and interacts with ferredoxin-NADP oxidoreductase. This Prochlorococcus marinus (strain MIT 9215) protein is Photosystem I reaction center subunit IV.